The following is a 261-amino-acid chain: Putative cytochrome YdhU (261 aa).

A helical membrane pass occupies residues 25 to 45 (FWPVWLIIAGVLLVGMWLVLG). H77 lines the heme b pocket. 3 consecutive transmembrane segments (helical) span residues 81-101 (ALLFVLLLASGLINHFAMVGA), 108-128 (VAVHEVCGFLLLACWLGFVLI), and 182-202 (VAYVGVMYGLLPLLLLTGLLC). H111 is a heme b binding site. Residues H223 and H237 each coordinate heme b. The helical transmembrane segment at 224–244 (FALAFISLFFIFGHLYLCTTG) threads the bilayer. H237 is a binding site for a menaquinone.

This sequence belongs to the PhsC family. Heme serves as cofactor.

The protein resides in the cell inner membrane. The protein is Putative cytochrome YdhU (ydhU) of Escherichia coli (strain K12).